A 191-amino-acid polypeptide reads, in one-letter code: UPF0398 protein LSEI_1479 (191 aa).

The protein belongs to the UPF0398 family.

The polypeptide is UPF0398 protein LSEI_1479 (Lacticaseibacillus paracasei (strain ATCC 334 / BCRC 17002 / CCUG 31169 / CIP 107868 / KCTC 3260 / NRRL B-441) (Lactobacillus paracasei)).